Consider the following 369-residue polypeptide: Flagellar P-ring protein (369 aa).

The first 23 residues, 1–23 (MIKQFAVSLLLVLLTLVTTTASA), serve as a signal peptide directing secretion.

It belongs to the FlgI family. The basal body constitutes a major portion of the flagellar organelle and consists of four rings (L,P,S, and M) mounted on a central rod.

The protein localises to the periplasm. It localises to the bacterial flagellum basal body. In terms of biological role, assembles around the rod to form the L-ring and probably protects the motor/basal body from shearing forces during rotation. The chain is Flagellar P-ring protein from Photorhabdus laumondii subsp. laumondii (strain DSM 15139 / CIP 105565 / TT01) (Photorhabdus luminescens subsp. laumondii).